Consider the following 483-residue polypeptide: Jacalin-related lectin 13 (483 aa).

Residues 1-20 (MTQKLESVGSERKSSEYMWD) are disordered. 3 consecutive Jacalin-type lectin domains span residues 2–147 (TQKL…YVTW), 150–295 (PARM…YFTT), and 307–461 (FREK…YFFP).

This sequence belongs to the jacalin lectin family.

The sequence is that of Jacalin-related lectin 13 (JAL13) from Arabidopsis thaliana (Mouse-ear cress).